Here is a 555-residue protein sequence, read N- to C-terminus: Natural resistance-associated macrophage protein 1 (555 aa).

Residues 1–63 (MSGSGPAMAS…STPGFSFRKL (63 aa)) lie on the Cytoplasmic side of the membrane. A helical transmembrane segment spans residues 64-81 (WAFTGPGFLMSIAYLDPG). The Extracellular segment spans residues 82–90 (NVESDLQCG). Residues 91–110 (AVAGFKLLWVLLWATVLGLL) traverse the membrane as a helical segment. The Cytoplasmic portion of the chain corresponds to 111 to 147 (CQRLAIRLGVVTGKDLAEICYLYYPRVPRVLLWLMME). Residues 148–168 (IAIIGSDMQEVIGTAIAFSLL) form a helical membrane-spanning segment. The Extracellular portion of the chain corresponds to 169–172 (SAGR). Residues 173 to 192 (IPLWGGVLITITDTLFFLFL) traverse the membrane as a helical segment. The Cytoplasmic portion of the chain corresponds to 193 to 201 (DKYGLRKLE). The chain crosses the membrane as a helical span at residues 202–222 (AFFGFLITIMALTFGYEYVMV). At 223–245 (RPAQTEVLKGIFLPYCPGCGREE) the chain is on the extracellular side. The helical transmembrane segment at 246–264 (LLQAVGIVGAIIMPHNIFL) threads the bilayer. The Cytoplasmic segment spans residues 265–292 (HSSLVKTRAIDRSKKEEVKEANMYFLTE). Residues 293–312 (SCLALFVSFLINLFVMAVFG) traverse the membrane as a helical segment. Topologically, residues 313-354 (EAFYHQRNEDVHNKCVNSSVSRYASIFPINNETVSVDIYQGG) are extracellular. N-linked (GlcNAc...) asparagine glycosylation is found at asparagine 329 and asparagine 343. Residues 355-374 (VILGCYFGAAALYIWAVGIL) traverse the membrane as a helical segment. The Cytoplasmic portion of the chain corresponds to 375-405 (AAGQSSTMTGTYAGQFVMEGFLQLRWSRFTR). A helical transmembrane segment spans residues 406–423 (VLFTRSLAILPTLFVAAF). At 424-434 (RDVSQLTGMND) the chain is on the extracellular side. The helical transmembrane segment at 435-455 (LLNVLQSILLPFAVLPVLTFT) threads the bilayer. The Cytoplasmic segment spans residues 456–471 (SLRPLMHDFANGLLGQ). The chain crosses the membrane as a helical span at residues 472–493 (VLMSLITGLVCAINVYFVVDFL). Residues 494–501 (PTLRGLGY) lie on the Extracellular side of the membrane. Residues 502–521 (LIPLGLLLVAYVAFVTYLLW) form a helical membrane-spanning segment. Topologically, residues 522 to 555 (TCSIAHGARFLARGRYNRFSFDVTADVPGLAGPH) are cytoplasmic.

This sequence belongs to the NRAMP family. In terms of tissue distribution, macrophages; spleen and thymus and at lower level in liver and lung.

The protein resides in the late endosome membrane. It localises to the lysosome membrane. The catalysed reaction is Zn(2+)(in) + H(+)(out) = Zn(2+)(out) + H(+)(in). The enzyme catalyses Fe(2+)(in) + H(+)(out) = Fe(2+)(out) + H(+)(in). It carries out the reaction Mn(2+)(in) + H(+)(out) = Mn(2+)(out) + H(+)(in). In terms of biological role, macrophage-specific antiporter that fluxes metal ions in either direction against a proton gradient. Localized to late endosomal lysosomal membranes, delivers bivalent cations from the cytosol into these acidic compartments where they may directly affect antimicrobial activity. Involved in iron metabolism and host natural resistance to infection with intracellular parasites. Pathogen resistance involves sequestration of Fe(2+) and Mn(2+), cofactors of both prokaryotic and eukaryotic catalases and superoxide dismutases, not only to protect the macrophage against its own generation of reactive oxygen species, but to deny the cations to the pathogen for synthesis of its protective enzymes. In Gallus gallus (Chicken), this protein is Natural resistance-associated macrophage protein 1 (SLC11A1).